The following is a 118-amino-acid chain: Late cornified envelope protein 1B (118 aa).

Residues 87-118 (CHRPQSSGCCSQPSGGSSCCGGGSGQHSGGCC) form a disordered region. Low complexity predominate over residues 90–103 (PQSSGCCSQPSGGS). Positions 104–118 (SCCGGGSGQHSGGCC) are enriched in gly residues.

This sequence belongs to the LCE family. Interacts with CYSRT1; the interaction is direct. As to expression, skin-specific. Expression was readily detected in adult trunk skin, adult arm skin, fetal skin, penal skin, vulva, esophagus and tongue. Not expressed in the cervix, rectum, lung, colon, or placenta.

In terms of biological role, precursors of the cornified envelope of the stratum corneum. This Homo sapiens (Human) protein is Late cornified envelope protein 1B (LCE1B).